The sequence spans 257 residues: UPF0246 protein Mpe_A2092 (257 aa).

Belongs to the UPF0246 family.

In Methylibium petroleiphilum (strain ATCC BAA-1232 / LMG 22953 / PM1), this protein is UPF0246 protein Mpe_A2092.